Reading from the N-terminus, the 959-residue chain is MSKKRLHEIAKEIGKSSKEVVERAKSLGLDVKSHASSVEEADANKIASSFSAGVTKNVQAGSAKDKQVAEQKAKAAKATTPQPAASKAAEKPAAATQEASQPVAVKPKSRNFKAEREARAKEQVARRQAGQNRSNDRKSDYRQLGRSQGQQTERAGHKSQNQQRDRRFDNRPSSGNNRNDGHRQAGNRDKNRSFNANSRQQDIGRQGQTQAGAPKIDFKARAAALKAEQNAEYARQRESRFREQEEAKRLEQQARQEAKAAALKAQTEDKKHREAPAKATEPAEPVASMAAAPVAKPVDKRRKKQNRPDKAHDRDHGLEDGQKKNKKSWNSQNQVRNQKNSNWNNNKKNKKGKHHKNSNTAPKPVTERKFHELPKEFEYSEGMTVAEIAKRIKREPAEIVKKLFMMGVMATQNQSLDGDTIELLMVDYGIEAKAKVEVDEADIERFFTDDNYLNPDNIVERAPVVTIMGHVDHGKTTLLDTLRNSRVATGEAGGITQHIGAYQIEEAGKKITFLDTPGHAAFTSMRARGASVTDITILIVAADDGVMPQTIEAINHSKAAGVPIIVAINKIDKPGANPERVISELAEHGIISTTWGGECEFVEISAKFNKNIDELLETVLLVAEVEELKADPTVRAIGTVIEARLDKGKGAVATLLVQQGTLHVQDPIVVGNTFGRVRAMTNDLGRRVKSAEPSTPVSITGLNETPMAGDHFAVYADEKAARAAGEERAKRALLKQRQNTQRVSLDNLFDTLKAGEIKTVNVIIKADVQGSVEALAASLLKIDVEGVRVNVVHSAVGAINESDVTLAEASNAVIIGFNVRPTPQARQQADADDVEIRLHSIIYKVIEEVEEAMKGKLDPEYQEKVLGEAIIRETFKVSKVGTIGGFMVVNGKVTRDSSVRVIRDSVVIFDGKLASLKHYKDDVKEIGNAQEGGLMIEGFNDIKVDDTIEAYVMEEIIRK.

Residues 33–373 (SHASSVEEAD…PVTERKFHEL (341 aa)) are disordered. Over residues 46–60 (IASSFSAGVTKNVQA) the composition is skewed to polar residues. The segment covering 63-73 (AKDKQVAEQKA) has biased composition (basic and acidic residues). Residues 76-100 (AKATTPQPAASKAAEKPAAATQEAS) show a composition bias toward low complexity. 3 stretches are compositionally biased toward basic and acidic residues: residues 112 to 125 (FKAE…EQVA), 134 to 143 (SNDRKSDYRQ), and 179 to 192 (NDGH…DKNR). A compositionally biased stretch (polar residues) spans 193–211 (SFNANSRQQDIGRQGQTQA). 2 stretches are compositionally biased toward basic and acidic residues: residues 234-258 (ARQR…RQEA) and 266-276 (QTEDKKHREAP). Residues 277–287 (AKATEPAEPVA) show a composition bias toward low complexity. The span at 306-323 (NRPDKAHDRDHGLEDGQK) shows a compositional bias: basic and acidic residues. The segment covering 328 to 346 (SWNSQNQVRNQKNSNWNNN) has biased composition (low complexity). Positions 347–357 (KKNKKGKHHKN) are enriched in basic residues. One can recognise a tr-type G domain in the interval 460 to 629 (ERAPVVTIMG…LLVAEVEELK (170 aa)). The segment at 469-476 (GHVDHGKT) is G1. A GTP-binding site is contributed by 469 to 476 (GHVDHGKT). Residues 494–498 (GITQH) are G2. The tract at residues 515 to 518 (DTPG) is G3. GTP is bound by residues 515–519 (DTPGH) and 569–572 (NKID). The segment at 569-572 (NKID) is G4. Residues 605–607 (SAK) form a G5 region.

The protein belongs to the TRAFAC class translation factor GTPase superfamily. Classic translation factor GTPase family. IF-2 subfamily.

It is found in the cytoplasm. Its function is as follows. One of the essential components for the initiation of protein synthesis. Protects formylmethionyl-tRNA from spontaneous hydrolysis and promotes its binding to the 30S ribosomal subunits. Also involved in the hydrolysis of GTP during the formation of the 70S ribosomal complex. This is Translation initiation factor IF-2 from Streptococcus equi subsp. zooepidemicus (strain H70).